The chain runs to 290 residues: 2-dehydropantoate 2-reductase (290 aa).

NADP(+) is bound by residues 8 to 13 (GPGAVG), asparagine 98, and alanine 124. Residue asparagine 98 coordinates substrate. Catalysis depends on lysine 175, which acts as the Proton donor. Asparagine 179 and serine 244 together coordinate substrate. Glutamate 256 is a binding site for NADP(+).

Belongs to the ketopantoate reductase family.

The protein localises to the cytoplasm. It carries out the reaction (R)-pantoate + NADP(+) = 2-dehydropantoate + NADPH + H(+). It participates in cofactor biosynthesis; (R)-pantothenate biosynthesis; (R)-pantoate from 3-methyl-2-oxobutanoate: step 2/2. Its function is as follows. Catalyzes the NADPH-dependent reduction of ketopantoate into pantoic acid. The chain is 2-dehydropantoate 2-reductase from Caulobacter vibrioides (strain ATCC 19089 / CIP 103742 / CB 15) (Caulobacter crescentus).